We begin with the raw amino-acid sequence, 355 residues long: Putative GPI-anchor transamidase (355 aa).

The signal sequence occupies residues 1–24 (MFNIMLVKFVVIFALILASCRVEA). Residues histidine 165 and cysteine 207 contribute to the active site.

This sequence belongs to the peptidase C13 family.

It participates in glycolipid biosynthesis; glycosylphosphatidylinositol-anchor biosynthesis. Mediates GPI anchoring in the endoplasmic reticulum, by replacing a protein's C-terminal GPI attachment signal peptide with a pre-assembled GPI. During this transamidation reaction, the GPI transamidase forms a carbonyl intermediate with the substrate protein. The polypeptide is Putative GPI-anchor transamidase (Drosophila melanogaster (Fruit fly)).